A 282-amino-acid polypeptide reads, in one-letter code: NADPH-dependent 7-cyano-7-deazaguanine reductase (282 aa).

Ile82–Ser84 is a binding site for substrate. Residue Ser84–Lys85 participates in NADPH binding. Residue Cys189 is the Thioimide intermediate of the active site. Residue Asp196 is the Proton donor of the active site. His228–Glu229 serves as a coordination point for substrate. Arg257–Gly258 contacts NADPH.

The protein belongs to the GTP cyclohydrolase I family. QueF type 2 subfamily. Homodimer.

The protein localises to the cytoplasm. The catalysed reaction is 7-aminomethyl-7-carbaguanine + 2 NADP(+) = 7-cyano-7-deazaguanine + 2 NADPH + 3 H(+). The protein operates within tRNA modification; tRNA-queuosine biosynthesis. Its function is as follows. Catalyzes the NADPH-dependent reduction of 7-cyano-7-deazaguanine (preQ0) to 7-aminomethyl-7-deazaguanine (preQ1). In Delftia acidovorans (strain DSM 14801 / SPH-1), this protein is NADPH-dependent 7-cyano-7-deazaguanine reductase.